The following is a 211-amino-acid chain: ATP phosphoribosyltransferase (211 aa).

This sequence belongs to the ATP phosphoribosyltransferase family. Short subfamily. In terms of assembly, heteromultimer composed of HisG and HisZ subunits.

The protein localises to the cytoplasm. The enzyme catalyses 1-(5-phospho-beta-D-ribosyl)-ATP + diphosphate = 5-phospho-alpha-D-ribose 1-diphosphate + ATP. Its pathway is amino-acid biosynthesis; L-histidine biosynthesis; L-histidine from 5-phospho-alpha-D-ribose 1-diphosphate: step 1/9. Its function is as follows. Catalyzes the condensation of ATP and 5-phosphoribose 1-diphosphate to form N'-(5'-phosphoribosyl)-ATP (PR-ATP). Has a crucial role in the pathway because the rate of histidine biosynthesis seems to be controlled primarily by regulation of HisG enzymatic activity. The chain is ATP phosphoribosyltransferase from Bacillus mycoides (strain KBAB4) (Bacillus weihenstephanensis).